A 333-amino-acid polypeptide reads, in one-letter code: Transcription initiation factor IIB (333 aa).

Residues E33–Q64 form a TFIIB-type zinc finger. Residues C37, C40, C56, and C59 each contribute to the Zn(2+) site. 2 consecutive repeat copies span residues Q149–L232 and L243–K324.

The protein belongs to the TFIIB family.

Stabilizes TBP binding to an archaeal box-A promoter. Also responsible for recruiting RNA polymerase II to the pre-initiation complex (DNA-TBP-TFIIB). This is Transcription initiation factor IIB from Pyrobaculum neutrophilum (strain DSM 2338 / JCM 9278 / NBRC 100436 / V24Sta) (Thermoproteus neutrophilus).